The sequence spans 89 residues: Small ribosomal subunit protein uS17 (89 aa).

It belongs to the universal ribosomal protein uS17 family. Part of the 30S ribosomal subunit.

In terms of biological role, one of the primary rRNA binding proteins, it binds specifically to the 5'-end of 16S ribosomal RNA. This Coxiella burnetii (strain RSA 493 / Nine Mile phase I) protein is Small ribosomal subunit protein uS17.